Reading from the N-terminus, the 277-residue chain is Thiazole synthase (277 aa).

Lysine 119 acts as the Schiff-base intermediate with DXP in catalysis. 1-deoxy-D-xylulose 5-phosphate is bound by residues glycine 180, 206 to 207, and 228 to 229; these read AG and NT.

Belongs to the ThiG family. In terms of assembly, homotetramer. Forms heterodimers with either ThiH or ThiS.

The protein localises to the plastid. The protein resides in the chloroplast. It catalyses the reaction [ThiS sulfur-carrier protein]-C-terminal-Gly-aminoethanethioate + 2-iminoacetate + 1-deoxy-D-xylulose 5-phosphate = [ThiS sulfur-carrier protein]-C-terminal Gly-Gly + 2-[(2R,5Z)-2-carboxy-4-methylthiazol-5(2H)-ylidene]ethyl phosphate + 2 H2O + H(+). It functions in the pathway cofactor biosynthesis; thiamine diphosphate biosynthesis. Functionally, catalyzes the rearrangement of 1-deoxy-D-xylulose 5-phosphate (DXP) to produce the thiazole phosphate moiety of thiamine. Sulfur is provided by the thiocarboxylate moiety of the carrier protein ThiS. In vitro, sulfur can be provided by H(2)S. This Pyropia yezoensis (Susabi-nori) protein is Thiazole synthase.